The following is a 257-amino-acid chain: Imidazole glycerol phosphate synthase subunit HisF (257 aa).

Residues Asp-12 and Asp-131 contribute to the active site.

The protein belongs to the HisA/HisF family. In terms of assembly, heterodimer of HisH and HisF.

Its subcellular location is the cytoplasm. The enzyme catalyses 5-[(5-phospho-1-deoxy-D-ribulos-1-ylimino)methylamino]-1-(5-phospho-beta-D-ribosyl)imidazole-4-carboxamide + L-glutamine = D-erythro-1-(imidazol-4-yl)glycerol 3-phosphate + 5-amino-1-(5-phospho-beta-D-ribosyl)imidazole-4-carboxamide + L-glutamate + H(+). It functions in the pathway amino-acid biosynthesis; L-histidine biosynthesis; L-histidine from 5-phospho-alpha-D-ribose 1-diphosphate: step 5/9. Functionally, IGPS catalyzes the conversion of PRFAR and glutamine to IGP, AICAR and glutamate. The HisF subunit catalyzes the cyclization activity that produces IGP and AICAR from PRFAR using the ammonia provided by the HisH subunit. This is Imidazole glycerol phosphate synthase subunit HisF from Burkholderia thailandensis (strain ATCC 700388 / DSM 13276 / CCUG 48851 / CIP 106301 / E264).